Consider the following 204-residue polypeptide: MNVTSISFPYGESIHWFSPQKIDSLPHSQLKEWLLATGSLTQRLKTHCKHFEVKVLGEHLLEPLADEFPAQTNPVWIREVLLCLDGTPWVFARTLIPQTILGSQTPNYQNADDKQIREQQNDFTRLGTRPLGELLFSSPDITPGNIEVAQFETCGRLAALATSLNQQVNSSLWGRRRYFNLHGSQLIVSEIFLPAAVEYINQSI.

Substrate is bound by residues Arg78, Leu131, and Glu190.

This sequence belongs to the UbiC family.

It is found in the cytoplasm. It catalyses the reaction chorismate = 4-hydroxybenzoate + pyruvate. Its pathway is cofactor biosynthesis; ubiquinone biosynthesis. Functionally, removes the pyruvyl group from chorismate, with concomitant aromatization of the ring, to provide 4-hydroxybenzoate (4HB) for the ubiquinone pathway. The protein is Probable chorismate pyruvate-lyase of Shewanella frigidimarina (strain NCIMB 400).